The primary structure comprises 475 residues: 3-hydroxyacyl-CoA dehydrogenase-like protein LAM1 (475 aa).

99 to 104 (GTRPFA) lines the NAD(+) pocket. Lys149 lines the CoA pocket. Asn245 is a binding site for NAD(+).

It belongs to the 3-hydroxyacyl-CoA dehydrogenase family.

It functions in the pathway mycotoxin biosynthesis. Its function is as follows. 3-hydroxyacyl-CoA dehydrogenase-like protein; part of the Tox1A locus, one of the 2 loci that mediate the biosynthesis of T-toxin, a family of linear polyketides 37 to 45 carbons in length, of which the major component is 41 carbons, and which leads to high virulence to maize. One of the PKSs (PKS1 or PKS2) could synthesize a precursor, used subsequently by the other PKS as starter unit, to add additional carbons. Variability in the length of the final carbon backbone C35-47 could be achieved by varying the number of condensation cycles, or use of different starter or extender units or might be due to decarboxylation of the penultimate product, catalyzed by DEC1. Additional proteins are required for the biosynthesis of T-toxin, including oxidoreductases RED1, RED2, RED3, LAM1 and OXI1, as well as esterase TOX9. In Cochliobolus heterostrophus (strain C4 / ATCC 48331 / race T) (Southern corn leaf blight fungus), this protein is 3-hydroxyacyl-CoA dehydrogenase-like protein LAM1.